Consider the following 575-residue polypeptide: MAIIPGVEQKPMSSNLESRIDQGTGREPADMVLKGGRFFDLVTGELVASDIAICGDTVVGTCGDYKGRHEIDISGKIVVPGFIDTHLHIESSLVTPHEFDRCVLPYGVTTAICDPHEIANVLGAEGLQFFLDSAMETIMDIRVQLSSCVPATHLETSGADLPIEKLLPFRNHPKVIGLAEFMNFPGVIHKDPVCMAKLEAFQGQHIDGHAPLLSGAALNGYLAAGIRTEHECTSAAEALEKIRKGMHILVREGSVSKDLHALMPIITERLSPYLALCTDDRNPLDIAEQGHLDYMIRTAIASGVEPLAIYRAASISAAKAFGLRDRGLVAPGWRADLVVIDTLQNCKASMVLSGGRLVDDALFATRKPVAPVGLDSVKARPVLASHFGVPVTEGETPVMGVLPGKIITEHRRYKLPTDGNQTTVDLENDIIKVAVIERHGKNGNHANGFVQGFGLKKGAIASTVGHDSHNICVVGVSEDDMALAANRLGDIKGGFVVVEDGRVTGEIALPVAGLMSLEPYETVRDTLHTLRKAAYALGTTLEEPFLQVAFLPLPVIPHLKISDMGMVDVDRFALI.

Belongs to the metallo-dependent hydrolases superfamily. Adenine deaminase family. It depends on Mn(2+) as a cofactor.

The enzyme catalyses adenine + H2O + H(+) = hypoxanthine + NH4(+). The sequence is that of Adenine deaminase 1 from Agrobacterium fabrum (strain C58 / ATCC 33970) (Agrobacterium tumefaciens (strain C58)).